The primary structure comprises 418 residues: Nucleoside permease NupG (418 aa).

Over 1–4 the chain is Cytoplasmic; that stretch reads MNLK. Residues 5-29 form a helical membrane-spanning segment; that stretch reads LQLKILSFLQFCLWGSWLTTLGSYM. Topologically, residues 30 to 36 are periplasmic; sequence FVTLKFD. A helical transmembrane segment spans residues 37–58; it reads GASIGAVYSSLGIAAVFMPALL. The Cytoplasmic portion of the chain corresponds to 59–67; the sequence is GIVADKWLS. The helical transmembrane segment at 68 to 88 threads the bilayer; sequence AKWVYAICHTIGAITLFMAAQ. Topologically, residues 89–91 are periplasmic; the sequence is VTT. Residues 92–113 form a helical membrane-spanning segment; the sequence is PEAMFLVILINSFAYMPTLGLI. The Cytoplasmic segment spans residues 114–135; that stretch reads NTISYYRLQNAGMDIVTDFPPI. The chain crosses the membrane as a helical span at residues 136–156; that stretch reads RIWGTIGFIMAMWVVSLSGFE. Topologically, residues 157 to 158 are periplasmic; the sequence is LS. The helical transmembrane segment at 159-178 threads the bilayer; sequence HMQLYIGAALSAILVLFTLT. Over 179 to 209 the chain is Cytoplasmic; it reads LPHIPVAKQQANQSWTTLLGLDAFALFKNKR. Residues 210–236 form a helical membrane-spanning segment; it reads MAIFFIFSMLLGAELQITNMFGNTFLH. Residues 237–247 are Periplasmic-facing; that stretch reads SFDKDPMFASS. Residues 248–268 traverse the membrane as a helical segment; sequence FIVQHASIIMSISQISETLFI. Topologically, residues 269–280 are cytoplasmic; that stretch reads LTIPFFLSRYGI. Residues 281-300 traverse the membrane as a helical segment; that stretch reads KNVMMISIVAWILRFALFAY. At 301–305 the chain is on the periplasmic side; it reads GDPTP. Residues 306 to 326 form a helical membrane-spanning segment; it reads FGTVLLVLSMIVYGCAFDFFN. Over 327–346 the chain is Cytoplasmic; it reads ISGSVFVEKEVSPAIRASAQ. The helical transmembrane segment at 347 to 369 threads the bilayer; the sequence is GMFLMMTNGFGCILGGIVSGKVV. Over 370-379 the chain is Periplasmic; sequence EMYTQNGITD. The helical transmembrane segment at 380–403 threads the bilayer; sequence WQTVWLIFAGYSVVLAFAFMAMFK. Residues 404-418 are Cytoplasmic-facing; it reads YKHVRVPTGTQTVSH.

Belongs to the major facilitator superfamily. Nucleoside:H(+) symporter (NHS) (TC 2.A.1.10) family.

It is found in the cell inner membrane. It carries out the reaction adenosine(in) + H(+)(in) = adenosine(out) + H(+)(out). The catalysed reaction is uridine(in) + H(+)(in) = uridine(out) + H(+)(out). It catalyses the reaction thymidine(in) + H(+)(in) = thymidine(out) + H(+)(out). The enzyme catalyses cytidine(in) + H(+)(in) = cytidine(out) + H(+)(out). It carries out the reaction 2'-deoxycytidine(in) + H(+)(in) = 2'-deoxycytidine(out) + H(+)(out). The catalysed reaction is guanosine(in) + H(+)(in) = guanosine(out) + H(+)(out). It catalyses the reaction inosine(in) + H(+)(in) = inosine(out) + H(+)(out). Inhibited by the protonophore uncouplers 2,4-dinitrophenol and carbonyl cyanide m-chlorophenylhydrazone (CCCP), and by valinomycin. Inhibited by the nucleoside antibiotic showdomycin. In terms of biological role, broad-specificity transporter of purine and pyrimidine nucleosides. Can transport adenosine, uridine, thymidine, cytidine, deoxycytidine, guanosine and inosine. Can also transport xanthosine, but with a very low affinity. Transport is driven by a proton motive force. The sequence is that of Nucleoside permease NupG from Escherichia coli (strain K12).